Reading from the N-terminus, the 282-residue chain is Bifunctional protein FolD (282 aa).

NADP(+) contacts are provided by residues 165–167 (NRS), serine 190, and isoleucine 231.

Belongs to the tetrahydrofolate dehydrogenase/cyclohydrolase family. In terms of assembly, homodimer.

The enzyme catalyses (6R)-5,10-methylene-5,6,7,8-tetrahydrofolate + NADP(+) = (6R)-5,10-methenyltetrahydrofolate + NADPH. It carries out the reaction (6R)-5,10-methenyltetrahydrofolate + H2O = (6R)-10-formyltetrahydrofolate + H(+). The protein operates within one-carbon metabolism; tetrahydrofolate interconversion. In terms of biological role, catalyzes the oxidation of 5,10-methylenetetrahydrofolate to 5,10-methenyltetrahydrofolate and then the hydrolysis of 5,10-methenyltetrahydrofolate to 10-formyltetrahydrofolate. The polypeptide is Bifunctional protein FolD (Clostridium botulinum (strain 657 / Type Ba4)).